Reading from the N-terminus, the 199-residue chain is CASP-like protein 1B2 (199 aa).

Residues 1-22 (MALQSEEKLEVGYSSLQPKTRK) lie on the Cytoplasmic side of the membrane. Residues 23–43 (WVLLMLRVLAFFATAAATVVM) traverse the membrane as a helical segment. Topologically, residues 44–74 (GLNKETKTLVVATVGSTPIKASLAAKFQHTP) are extracellular. A helical membrane pass occupies residues 75-95 (AFVFFVIANGLASIHNLVMIM). The Cytoplasmic segment spans residues 96–112 (GDLFGQKLDYKGLRLAM). A helical transmembrane segment spans residues 113 to 133 (IAILDMMTVALVSGGVSAAAF). The Extracellular portion of the chain corresponds to 134 to 163 (MAELGKNGNSHARWNKICDKFETFCDHGGG). Residues 164-184 (ALIASFAGLILMLIISVMSII) traverse the membrane as a helical segment. The Cytoplasmic portion of the chain corresponds to 185–199 (KLLIKPKPDSTIVVP).

It belongs to the Casparian strip membrane proteins (CASP) family. In terms of assembly, homodimer and heterodimers.

It is found in the cell membrane. In Populus trichocarpa (Western balsam poplar), this protein is CASP-like protein 1B2.